A 305-amino-acid chain; its full sequence is MVNTERFIQQAVSEIRELTADARVVMALSGGVDSSVCAALAAQAIGERLEPIYVDTGLMRKGETDRIRHLFGHLNLRIVDASDEFLDALAGVADPETKRKIIGERFIRVFEREAEKTGATVLLQGTIYPDRIESEGGIKSHHNVGGMPLGIAFTQVLEPLRDLYKDEVREVAGALGLPREIQHRMPFPGPGLAVRIIGEVTREKVAVIREANAITEEELVEEFRPWQCLAALVGLGTGVKGDIRLHGWIVAVRAVNSRDGMTADPLEVPYPVLFKIASRITAEIPSVARVVYDVTPKPPATIEYE.

Residues 2 to 184 (VNTERFIQQA…LGLPREIQHR (183 aa)) enclose the GMPS ATP-PPase domain. 29 to 35 (SGGVDSS) contributes to the ATP binding site.

Heterodimer composed of a glutamine amidotransferase subunit (A) and a GMP-binding subunit (B).

The catalysed reaction is XMP + L-glutamine + ATP + H2O = GMP + L-glutamate + AMP + diphosphate + 2 H(+). It participates in purine metabolism; GMP biosynthesis; GMP from XMP (L-Gln route): step 1/1. Its function is as follows. Catalyzes the synthesis of GMP from XMP. This chain is GMP synthase [glutamine-hydrolyzing] subunit B, found in Methanosphaerula palustris (strain ATCC BAA-1556 / DSM 19958 / E1-9c).